The following is a 538-amino-acid chain: Mevalonate kinase erg12 (538 aa).

Residues Met1–Pro87 are disordered. The segment covering Thr9–Ser29 has biased composition (polar residues). The segment covering Thr57–Thr69 has biased composition (low complexity). ATP contacts are provided by residues Lys99, Ser231, and Gly236–Ser242. 2 residues coordinate Mg(2+): Ser242 and Glu287. Residue Asp298 is the Proton acceptor of the active site.

It belongs to the GHMP kinase family. Mevalonate kinase subfamily. Homodimer. The cofactor is Mg(2+).

The protein localises to the cytoplasm. The protein resides in the cytosol. The enzyme catalyses (R)-mevalonate + ATP = (R)-5-phosphomevalonate + ADP + H(+). Its pathway is isoprenoid biosynthesis; isopentenyl diphosphate biosynthesis via mevalonate pathway; isopentenyl diphosphate from (R)-mevalonate: step 1/3. In terms of biological role, mevalonate kinase; part of the second module of ergosterol biosynthesis pathway that includes the middle steps of the pathway. Erg12 converts mevalonate into 5-phosphomevalonate. The second module is carried out in the vacuole and involves the formation of farnesyl diphosphate, which is also an important intermediate in the biosynthesis of ubiquinone, dolichol, heme and prenylated proteins. Activity by the mevalonate kinase erg12 (AFUA_4G07780) first converts mevalonate into 5-phosphomevalonate. 5-phosphomevalonate is then further converted to 5-diphosphomevalonate by the phosphomevalonate kinase erg8 (AFUA_5G10680). The diphosphomevalonate decarboxylase mvd1 (AFUA_4G07130) then produces isopentenyl diphosphate. The isopentenyl-diphosphate delta-isomerase idi1 (AFUA_6G11160) then catalyzes the 1,3-allylic rearrangement of the homoallylic substrate isopentenyl (IPP) to its highly electrophilic allylic isomer, dimethylallyl diphosphate (DMAPP). Finally the farnesyl diphosphate synthase erg20 (AFUA_5G02450) catalyzes the sequential condensation of isopentenyl pyrophosphate with dimethylallyl pyrophosphate, and then with the resultant geranylpyrophosphate to the ultimate product farnesyl pyrophosphate. The sequence is that of Mevalonate kinase erg12 from Aspergillus fumigatus (strain ATCC MYA-4609 / CBS 101355 / FGSC A1100 / Af293) (Neosartorya fumigata).